Reading from the N-terminus, the 274-residue chain is Coat protein (274 aa).

The segment at 88–112 (RPAKQVLKGSSSKSQQRDEGEVVFT) is disordered. Residues 102–112 (QQRDEGEVVFT) show a composition bias toward basic and acidic residues.

It is found in the virion. The sequence is that of Coat protein from Rubus idaeus (Raspberry).